The chain runs to 803 residues: Subtilisin-like protease SBT5.5 (803 aa).

A signal peptide spans 1-22; that stretch reads MKRIFGIFIFLSLLLFLVPLLA. Residues 23 to 112 constitute a propeptide, activation peptide; that stretch reads SCTKEKQVYI…KSDPRKYKIH (90 aa). The Inhibitor I9 domain occupies 30 to 108; that stretch reads VYIVYFGEHK…VSVFKSDPRK (79 aa). One can recognise a Peptidase S8 domain in the interval 140 to 656; it reads KYDVNDRFRV…SRHFRPTKAA (517 aa). Asp-169 serves as the catalytic Charge relay system. Asn-202 carries N-linked (GlcNAc...) asparagine glycosylation. The Charge relay system role is filled by His-244. The region spanning 409 to 504 is the PA domain; the sequence is YAPLVYAPDV…VFSSTVDRIL (96 aa). The active-site Charge relay system is the Ser-589. An N-linked (GlcNAc...) asparagine glycan is attached at Asn-725.

It belongs to the peptidase S8 family.

The protein resides in the secreted. The polypeptide is Subtilisin-like protease SBT5.5 (Arabidopsis thaliana (Mouse-ear cress)).